A 340-amino-acid chain; its full sequence is Guanine nucleotide-binding protein G(I)/G(S)/G(T) subunit beta-2 (340 aa).

Ser-2 carries the N-acetylserine modification. 7 WD repeats span residues 53 to 83 (GHLA…IIWD), 95 to 125 (LRSS…SIYS), 141 to 170 (GHTG…ALWD), 182 to 212 (GHSG…KLWD), 224 to 254 (GHES…RLFD), 268 to 298 (NIIC…NIWD), and 310 to 340 (GHDN…KIWN). Tyr-239 bears the Phosphotyrosine mark.

The protein belongs to the WD repeat G protein beta family. G proteins are composed of 3 units, alpha, beta and gamma. In this context, interacts with GNAI2 and GNG2. Interacts with ARHGEF18 and RASD2. Interacts with ATXN10. Interacts with SCN8A. Expressed in all cardiac subcompartments and in the brain, with highest levels in the atrioventricular node and brain.

Its subcellular location is the cytoplasm. The protein resides in the perinuclear region. It localises to the cell membrane. Guanine nucleotide-binding proteins (G proteins) are involved as a modulator or transducer in various transmembrane signaling systems. The beta and gamma chains are required for the GTPase activity, for replacement of GDP by GTP, and for G protein-effector interaction. This is Guanine nucleotide-binding protein G(I)/G(S)/G(T) subunit beta-2 (GNB2) from Homo sapiens (Human).